We begin with the raw amino-acid sequence, 390 residues long: tRNA(Met) cytidine acetate ligase (390 aa).

ATP contacts are provided by residues 7–20, glycine 101, asparagine 162, and arginine 187; that span reads VVEYNPFHNGHKLH.

This sequence belongs to the TmcAL family.

The protein localises to the cytoplasm. It carries out the reaction cytidine(34) in elongator tRNA(Met) + acetate + ATP = N(4)-acetylcytidine(34) in elongator tRNA(Met) + AMP + diphosphate. Functionally, catalyzes the formation of N(4)-acetylcytidine (ac(4)C) at the wobble position of elongator tRNA(Met), using acetate and ATP as substrates. First activates an acetate ion to form acetyladenylate (Ac-AMP) and then transfers the acetyl group to tRNA to form ac(4)C34. In Listeria monocytogenes serotype 4b (strain CLIP80459), this protein is tRNA(Met) cytidine acetate ligase.